The primary structure comprises 471 residues: MKNPKPFGVVAGFVRLHKSSLGQARYYSIPNDVSIPASKRKFIPSSGTYPKGFLVACAHAGVKESNTQFPDVALICSETPCSAAAVFTTNKFQAAPVQVSKQVLEKRQGAGIRGVVINSGCANAVTGKGGLEHAKMMSAKVDECNGTPSTGPQDTSTLVMSTGVIGQRLPIKKILDAIPTAHSNLASTHSTWLATARAICTTDTFPKLLSRPFTLPSSPNRQYCLAGMTKGAGMIHPNMATLLGILCTDVPISPSALKALLTHAVSRSFNAISIDGDTSTNDTIALLANGAAGGEAITTTSSPDYAAMQTILTSFAQSLAQLVVRDGEGATKFIMVRVCNSPSHADAKVIASTIARSPLVKTALYGKDANWGRILCAIGYAQGIAEGTVVPERTSVSFRPVDGSAELKLLVNGERKAWNESRREDLADEDLEIVLIWCRQKGEKGLGGGGGVVLVCDFSHEYVTINGDYRT.

Substrate-binding residues include Thr-201, Lys-230, Thr-241, Glu-328, Asn-466, and Thr-471. Catalysis depends on Thr-241, which acts as the Nucleophile.

The protein belongs to the ArgJ family. In terms of assembly, heterodimer of an alpha and a beta chain. In terms of processing, the alpha and beta chains are autoproteolytically processed from a single precursor protein within the mitochondrion.

It localises to the mitochondrion matrix. The catalysed reaction is N(2)-acetyl-L-ornithine + L-glutamate = N-acetyl-L-glutamate + L-ornithine. It carries out the reaction L-glutamate + acetyl-CoA = N-acetyl-L-glutamate + CoA + H(+). It functions in the pathway amino-acid biosynthesis; L-arginine biosynthesis; L-ornithine and N-acetyl-L-glutamate from L-glutamate and N(2)-acetyl-L-ornithine (cyclic): step 1/1. Its pathway is amino-acid biosynthesis; L-arginine biosynthesis; N(2)-acetyl-L-ornithine from L-glutamate: step 1/4. Its function is as follows. Catalyzes two activities which are involved in the cyclic version of arginine biosynthesis: the synthesis of acetylglutamate from glutamate and acetyl-CoA, and of ornithine by transacetylation between acetylornithine and glutamate. The chain is Arginine biosynthesis bifunctional protein ArgJ, mitochondrial from Ajellomyces capsulatus (strain NAm1 / WU24) (Darling's disease fungus).